The sequence spans 140 residues: MANRTIIAFDFGTKSIGVAIGQEVTGTARALTAFKAQDGTPDWQQVEKLLKEWQPNLVVVGLPLNMDGTEQPLTARARRFANRLHGRFGVQVALQDERLSTVEARANLFDRGGYRALDKGSVDAASAVIILESWFDEQAG.

The protein belongs to the YqgF nuclease family.

The protein resides in the cytoplasm. Could be a nuclease involved in processing of the 5'-end of pre-16S rRNA. The chain is Putative pre-16S rRNA nuclease from Yersinia pseudotuberculosis serotype O:1b (strain IP 31758).